A 488-amino-acid polypeptide reads, in one-letter code: Altronate oxidoreductase (488 aa).

18–29 (VIQFGEGNFLRA) is an NAD(+) binding site.

Belongs to the mannitol dehydrogenase family. UxaB subfamily.

The catalysed reaction is D-altronate + NAD(+) = keto-D-tagaturonate + NADH + H(+). Its pathway is carbohydrate metabolism; pentose and glucuronate interconversion. This Pectobacterium atrosepticum (strain SCRI 1043 / ATCC BAA-672) (Erwinia carotovora subsp. atroseptica) protein is Altronate oxidoreductase.